Consider the following 347-residue polypeptide: Anthranilate phosphoribosyltransferase (347 aa).

5-phospho-alpha-D-ribose 1-diphosphate contacts are provided by residues Gly88, 91-92, Thr96, 98-101, 116-124, and Ser128; these read GD, NIST, and KHGNRSVSS. Gly88 serves as a coordination point for anthranilate. Ser100 contacts Mg(2+). Residue Asn119 coordinates anthranilate. Residue Arg174 coordinates anthranilate. Mg(2+) is bound by residues Asp232 and Glu233.

The protein belongs to the anthranilate phosphoribosyltransferase family. Homodimer. Mg(2+) serves as cofactor.

The enzyme catalyses N-(5-phospho-beta-D-ribosyl)anthranilate + diphosphate = 5-phospho-alpha-D-ribose 1-diphosphate + anthranilate. Its pathway is amino-acid biosynthesis; L-tryptophan biosynthesis; L-tryptophan from chorismate: step 2/5. Its function is as follows. Catalyzes the transfer of the phosphoribosyl group of 5-phosphorylribose-1-pyrophosphate (PRPP) to anthranilate to yield N-(5'-phosphoribosyl)-anthranilate (PRA). In Shewanella sp. (strain MR-7), this protein is Anthranilate phosphoribosyltransferase.